A 716-amino-acid polypeptide reads, in one-letter code: Calpain-1 catalytic subunit (716 aa).

Positions 55-354 (LFRDEAFPPV…FTRLEICNLT (300 aa)) constitute a Calpain catalytic domain. Gln-109 and Asp-114 together coordinate Ca(2+). Active-site residues include Cys-115, His-272, and Asn-296. 2 residues coordinate Ca(2+): Asp-318 and Glu-323. Thr-354 carries the post-translational modification Phosphothreonine. Residues 355 to 528 (PDALKSQRFR…KSAGTQELDD (174 aa)) form a domain III region. The linker stretch occupies residues 529-544 (QVQANLPDEQVLSEEE). EF-hand domains lie at 543–578 (EEIDENFKSLFRQLAGEDMEISVKELRTILNRIISK), 587–620 (FSLESCRSMVNLMDRDGNGKLGLVEFNILWNRIR), 617–652 (NRIRNYLSIFRKFDLDKSGSMSAYEMRMAIEFAGFK), and 682–716 (VRLETMFRFFKTLDTDLDGVVTFDLFKWLQLTMFA). Residues 545–715 (IDENFKSLFR…LFKWLQLTMF (171 aa)) are domain IV. Residues Asp-600, Asp-602, Asn-604, Lys-606, Glu-611, Asp-630, Asp-632, Ser-634, Ser-636, and Glu-641 each contribute to the Ca(2+) site.

The protein belongs to the peptidase C2 family. In terms of assembly, forms a heterodimer with a small (regulatory) subunit CAPNS1. Ca(2+) serves as cofactor. In terms of processing, undergoes calcium-induced successive autoproteolytic cleavages that generate a membrane-bound 78 kDa active form and an intracellular 75 kDa active form. Calpastatin reduces with high efficiency the transition from 78 kDa to 75 kDa calpain forms.

The protein localises to the cytoplasm. The protein resides in the cell membrane. The enzyme catalyses Broad endopeptidase specificity.. With respect to regulation, activated by micromolar concentrations of calcium and inhibited by calpastatin. In terms of biological role, calcium-regulated non-lysosomal thiol-protease which catalyzes limited proteolysis of substrates involved in cytoskeletal remodeling and signal transduction. Proteolytically cleaves CTBP1. Cleaves and activates caspase-7 (CASP7). In Bos taurus (Bovine), this protein is Calpain-1 catalytic subunit.